We begin with the raw amino-acid sequence, 370 residues long: S-adenosylmethionine decarboxylase proenzyme (370 aa).

Phenylalanine 28 serves as a coordination point for substrate. Residues glutamate 29 and glutamate 32 contribute to the active site. Residue glutamate 85 participates in substrate binding. The Schiff-base intermediate with substrate; via pyruvic acid role is filled by serine 86. At serine 86 the chain carries Pyruvic acid (Ser); by autocatalysis. The active-site Proton donor; for catalytic activity is the cysteine 100. Catalysis depends on proton acceptor; for processing activity residues serine 250 and histidine 263. Glutamate 267 contributes to the substrate binding site.

The protein belongs to the eukaryotic AdoMetDC family. In terms of assembly, forms a heterodimer with catalytically inactive AdoMetDC prozyme; heterodimerization is required to activate AdoMetDC. Pyruvate serves as cofactor. Post-translationally, is synthesized initially as an inactive proenzyme. Formation of the active enzyme involves a self-maturation process in which the active site pyruvoyl group is generated from an internal serine residue via an autocatalytic post-translational modification. Two non-identical subunits are generated from the proenzyme in this reaction, and the pyruvate is formed at the N-terminus of the alpha chain, which is derived from the carboxyl end of the proenzyme. The post-translation cleavage follows an unusual pathway, termed non-hydrolytic serinolysis, in which the side chain hydroxyl group of the serine supplies its oxygen atom to form the C-terminus of the beta chain, while the remainder of the serine residue undergoes an oxidative deamination to the alpha chain.

It catalyses the reaction S-adenosyl-L-methionine + H(+) = S-adenosyl 3-(methylsulfanyl)propylamine + CO2. It participates in amine and polyamine biosynthesis; S-adenosylmethioninamine biosynthesis; S-adenosylmethioninamine from S-adenosyl-L-methionine: step 1/1. Its activity is regulated as follows. Allosterically activated by AdoMetDC prozyme. Activated by putrescine. Inhibited by spermine and methylglyoxal-bis(guanylhydrazone) (MGBG) and slightly by spermidine. Inhibited by 5'-([(Z)-4-amino-2-butenyl]methylamino)-5'-deoxyadenosine (MDL 73811). Functionally, probably in association with catalytically inactive AdoMetDC prozyme, catalyzes the decarboxylation of S-adenosyl-L-methionine which is essential for the biosynthesis of the polyamine spermidine. Required for growth and survival during the bloodstream life cycle stage. The sequence is that of S-adenosylmethionine decarboxylase proenzyme from Trypanosoma cruzi.